Here is a 185-residue protein sequence, read N- to C-terminus: Transcriptional repressor NrdR (185 aa).

Residues 1-24 (MRCPFCGGPDTQVKDSRPSEDSSA) form a disordered region. A zinc finger spans residues 3 to 34 (CPFCGGPDTQVKDSRPSEDSSAIRRRRVCPDC). Positions 12–24 (QVKDSRPSEDSSA) are enriched in basic and acidic residues. The 91-residue stretch at 49–139 (LVVLKRSGKR…VYKNFREAQD (91 aa)) folds into the ATP-cone domain. The segment at 148–185 (GERLDGEGDLPEQGDAVPAPPDEAVAAPRRGRPARKRA) is disordered. Over residues 176 to 185 (RRGRPARKRA) the composition is skewed to basic residues.

It belongs to the NrdR family. The cofactor is Zn(2+).

Functionally, negatively regulates transcription of bacterial ribonucleotide reductase nrd genes and operons by binding to NrdR-boxes. In Methylorubrum extorquens (strain CM4 / NCIMB 13688) (Methylobacterium extorquens), this protein is Transcriptional repressor NrdR.